Reading from the N-terminus, the 149-residue chain is MKSALLFTLVVAAVHAQSPQVISPAPRRESNEIDCPEYCLDVYDPVGDGEGNTYSNECYMKRAKCHNETTPPAWKDLVLITGSSTGEQPPSKKCSTVCPDVELPVCGSNRVRYGNPCELRIAACEHPELNIVEDSGKACVGSKVTPQEG.

Positions Met1–Ala16 are cleaved as a signal peptide. Kazal-like domains lie at Glu29–Gly86 and Gln88–Gly141. 2 disulfide bridges follow: Cys35/Cys65 and Cys39/Cys58. Asn67 is a glycosylation site (N-linked (GlcNAc...) asparagine). Cystine bridges form between Cys94–Cys124, Cys98–Cys117, and Cys106–Cys139.

In terms of assembly, interacts with host subtilisin-like protease P69B.

The protein localises to the secreted. Secreted effector that interacts with and inhibits the pathogenesis-related P69B subtilisin-like serine protease of host tomato. Inhibition of host proteases by a pathogen extracellular protease inhibitor forms a specific type of defense-counterdefense mechanism between plants and microbial pathogens. This chain is Extracellular protease inhibitor 1, found in Phytophthora infestans (Potato late blight agent).